The sequence spans 484 residues: UDP-N-acetylmuramoyl-L-alanyl-D-glutamate--2,6-diaminopimelate ligase (484 aa).

UDP-N-acetyl-alpha-D-muramoyl-L-alanyl-D-glutamate is bound at residue serine 30. An ATP-binding site is contributed by glycine 109–serine 115. Residues threonine 151–threonine 152, serine 178, and arginine 186 each bind UDP-N-acetyl-alpha-D-muramoyl-L-alanyl-D-glutamate. N6-carboxylysine is present on lysine 218. Residues arginine 379, aspartate 403–arginine 406, glycine 455, and glutamate 459 each bind meso-2,6-diaminopimelate. The Meso-diaminopimelate recognition motif motif lies at aspartate 403–arginine 406.

This sequence belongs to the MurCDEF family. MurE subfamily. Requires Mg(2+) as cofactor. In terms of processing, carboxylation is probably crucial for Mg(2+) binding and, consequently, for the gamma-phosphate positioning of ATP.

The protein localises to the cytoplasm. It catalyses the reaction UDP-N-acetyl-alpha-D-muramoyl-L-alanyl-D-glutamate + meso-2,6-diaminopimelate + ATP = UDP-N-acetyl-alpha-D-muramoyl-L-alanyl-gamma-D-glutamyl-meso-2,6-diaminopimelate + ADP + phosphate + H(+). It participates in cell wall biogenesis; peptidoglycan biosynthesis. Catalyzes the addition of meso-diaminopimelic acid to the nucleotide precursor UDP-N-acetylmuramoyl-L-alanyl-D-glutamate (UMAG) in the biosynthesis of bacterial cell-wall peptidoglycan. The chain is UDP-N-acetylmuramoyl-L-alanyl-D-glutamate--2,6-diaminopimelate ligase from Clostridioides difficile (strain 630) (Peptoclostridium difficile).